Reading from the N-terminus, the 625-residue chain is Putative xanthine/uracil permease C887.17 (625 aa).

A run of 10 helical transmembrane segments spans residues Ala49–Val69, Ala107–Met127, Glu154–Leu174, Ala192–Ile212, Met246–Tyr263, Phe328–Tyr348, Val369–Val389, Gly406–Phe426, Ile429–Thr449, and Ile465–Ile485. The disordered stretch occupies residues Glu595 to Ile625.

Belongs to the nucleobase:cation symporter-2 (NCS2) (TC 2.A.40) family. Azg-like subfamily.

Its subcellular location is the golgi apparatus membrane. This is Putative xanthine/uracil permease C887.17 from Schizosaccharomyces pombe (strain 972 / ATCC 24843) (Fission yeast).